Consider the following 665-residue polypeptide: Protein-arginine deiminase type-2 (665 aa).

Ca(2+) is bound by residues Asp-123, Asp-125, Asp-127, Glu-131, Asn-154, Asp-156, Asp-158, Asp-166, Asp-169, Lys-171, Asp-177, Asp-180, Glu-354, Asp-389, Phe-408, Leu-411, and Glu-412. Cys-647 functions as the Nucleophile in the catalytic mechanism.

Belongs to the protein arginine deiminase family. Homodimer. Ca(2+) is required as a cofactor. Spinal cord, submaxillary gland, cerebrum, cerebellum, and skeletal muscle.

The protein resides in the cytoplasm. The catalysed reaction is L-arginyl-[protein] + H2O = L-citrullyl-[protein] + NH4(+). Functionally, catalyzes the deimination of arginine residues of proteins. The protein is Protein-arginine deiminase type-2 (Padi2) of Rattus norvegicus (Rat).